The chain runs to 101 residues: opdI (101 aa).

Residues 30–49 traverse the membrane as a helical segment; that stretch reads GGMGGALKIVFLGMMTYFIA. The disordered stretch occupies residues 56–101; it reads SQHPPTDFNAPVQSVPQRAQRPSDTRLQGPVLLASNHPSGDSASPE. 2 stretches are compositionally biased toward polar residues: residues 66–81 and 91–101; these read PVQS…SDTR and NHPSGDSASPE.

The protein resides in the membrane. Functionally, part of the gene cluster that mediates the biosynthesis of oxopyrrolidines, polyketide-amino acid hybrid compounds with feature structures of tetramic acid. Does not seem to play a role in oxopyrrolidines A and B biosynthesis. The sequence is that of opdI from Penicillium oxalicum (strain 114-2 / CGMCC 5302) (Penicillium decumbens).